Reading from the N-terminus, the 248-residue chain is Probable 2-oxo-3-(5-oxofuran-2-ylidene)propanoate lactonase (248 aa).

Catalysis depends on residues Cys123, Asp180, and His212.

Belongs to the dienelactone hydrolase family.

It catalyses the reaction 2-oxo-3-(5-oxofuran-2-ylidene)propanoate + H2O = 3-maleylpyruvate + H(+). Involved in the 5-nitroanthranilic acid (5NAA) degradation. Catalyzes the hydrolysis of the lactone to produce maleylpyruvate biodegradation of 5-nitroanthranilate. The sequence is that of Probable 2-oxo-3-(5-oxofuran-2-ylidene)propanoate lactonase (naaC) from Bradyrhizobium sp.